A 240-amino-acid chain; its full sequence is Pyridoxine 5'-phosphate synthase (240 aa).

Asn7 lines the 3-amino-2-oxopropyl phosphate pocket. 9–10 provides a ligand contact to 1-deoxy-D-xylulose 5-phosphate; sequence DH. Arg18 is a binding site for 3-amino-2-oxopropyl phosphate. His43 (proton acceptor) is an active-site residue. Positions 45 and 50 each coordinate 1-deoxy-D-xylulose 5-phosphate. Glu70 acts as the Proton acceptor in catalysis. A 1-deoxy-D-xylulose 5-phosphate-binding site is contributed by Thr100. The active-site Proton donor is the His191. 3-amino-2-oxopropyl phosphate is bound by residues Gly192 and 213–214; that span reads GH.

Belongs to the PNP synthase family. Homooctamer; tetramer of dimers.

The protein resides in the cytoplasm. The catalysed reaction is 3-amino-2-oxopropyl phosphate + 1-deoxy-D-xylulose 5-phosphate = pyridoxine 5'-phosphate + phosphate + 2 H2O + H(+). The protein operates within cofactor biosynthesis; pyridoxine 5'-phosphate biosynthesis; pyridoxine 5'-phosphate from D-erythrose 4-phosphate: step 5/5. Functionally, catalyzes the complicated ring closure reaction between the two acyclic compounds 1-deoxy-D-xylulose-5-phosphate (DXP) and 3-amino-2-oxopropyl phosphate (1-amino-acetone-3-phosphate or AAP) to form pyridoxine 5'-phosphate (PNP) and inorganic phosphate. The sequence is that of Pyridoxine 5'-phosphate synthase from Gloeothece citriformis (strain PCC 7424) (Cyanothece sp. (strain PCC 7424)).